Consider the following 389-residue polypeptide: NAD-dependent protein deacetylase sirtuin-2 (389 aa).

The disordered stretch occupies residues 1–34 (MAEPDPSHPLETQAGKVQEAQDSDSDSEGGAAGG). Alanine 2 carries the N-acetylalanine modification. Residues serine 23, serine 25, serine 27, and serine 53 each carry the phosphoserine modification. The Deacetylase sirtuin-type domain maps to 57–338 (RLLDELTLEG…LALAELLGWK (282 aa)). NAD(+) is bound by residues 85–89 (AGIST) and 95–97 (DFR). Serine 100 carries the phosphoserine modification. Residue 167–170 (QNID) participates in NAD(+) binding. The Proton acceptor role is filled by histidine 187. 2 residues coordinate Zn(2+): cysteine 195 and cysteine 200. Phosphoserine is present on serine 207. Positions 221 and 224 each coordinate Zn(2+). NAD(+)-binding positions include 262–263 (TS), 286–288 (NKE), and cysteine 324. The disordered stretch occupies residues 350-389 (ASIDAQSGAEAPNPSTSASPRKSPPPAQDEARTTEREKPQ). Residues serine 368 and serine 372 each carry the phosphoserine modification. The span at 378–389 (DEARTTEREKPQ) shows a compositional bias: basic and acidic residues.

The protein belongs to the sirtuin family. Class I subfamily. Interacts with CDC20, FOXO3 and FZR1. Associates with microtubules in primary cortical mature neurons. Homotrimer. Interacts (via both phosphorylated, unphosphorylated, active or inactive forms) with HDAC6; the interaction is necessary for the complex to interact with alpha-tubulin, suggesting that these proteins belong to a large complex that deacetylates the cytoskeleton. Interacts with FOXO1; the interaction is disrupted upon serum-starvation or oxidative stress, leading to increased level of acetylated FOXO1 and induction of autophagy. Interacts with RELA; the interaction occurs in the cytoplasm and is increased in a TNF-alpha-dependent manner. Interacts with HOXA10; the interaction is direct. Interacts with YWHAB and YWHAG; the interactions occur in a AKT-dependent manner and increase SIRT2-dependent TP53 deacetylation. Interacts with MAPK1/ERK2 and MAPK3/ERK1; the interactions increase SIRT2 stability and deacetylation activity. Interacts (phosphorylated form) with KMT5A isoform 2; the interaction is direct, stimulates KMT5A-mediated methyltransferase activity on histone at 'Lys-20' (H4K20me1) and is increased in a H(2)O(2)-induced oxidative stress-dependent manner. Interacts with G6PD; the interaction is enhanced by H(2)O(2) treatment. Interacts with a G1/S-specific cyclin E-CDK2 complex. Interacts with AURKA, CDK5R1 (p35 form) and CDK5 and HIF1A. Interacts with the tRNA ligase SARS1; recruited to the VEGFA promoter via interaction with SARS1. Interacts with BEX4; negatively regulates alpha-tubulin deacetylation by SIRT2. Zn(2+) is required as a cofactor. In terms of processing, phosphorylated at phosphoserine and phosphothreonine. Phosphorylated at Ser-368 by a mitotic kinase CDK1/cyclin B at the G2/M transition; phosphorylation regulates the delay in cell-cycle progression. Phosphorylated at Ser-368 by a mitotic kinase G1/S-specific cyclin E/Cdk2 complex; phosphorylation inactivates SIRT2-mediated alpha-tubulin deacetylation and thereby negatively regulates cell adhesion, cell migration and neurite outgrowth during neuronal differentiation. Phosphorylated by cyclin A/Cdk2 and p35-Cdk5 complexes and to a lesser extent by the cyclin D3/Cdk4 and cyclin B/Cdk1, in vitro. Dephosphorylated at Ser-368 by CDC14A and CDC14B around early anaphase. Acetylated by EP300; acetylation leads both to the decreased of SIRT2-mediated alpha-tubulin deacetylase activity and SIRT2-mediated down-regulation of TP53 transcriptional activity. Post-translationally, ubiquitinated.

Its subcellular location is the nucleus. The protein localises to the cytoplasm. It is found in the perinuclear region. It localises to the cytoskeleton. The protein resides in the microtubule organizing center. Its subcellular location is the centrosome. The protein localises to the centriole. It is found in the spindle. It localises to the midbody. The protein resides in the chromosome. Its subcellular location is the perikaryon. The protein localises to the cell projection. It is found in the growth cone. It localises to the myelin membrane. It catalyses the reaction N(6)-acetyl-L-lysyl-[protein] + NAD(+) + H2O = 2''-O-acetyl-ADP-D-ribose + nicotinamide + L-lysyl-[protein]. It carries out the reaction N(6)-tetradecanoyl-L-lysyl-[protein] + NAD(+) + H2O = 2''-O-tetradecanoyl-ADP-D-ribose + nicotinamide + L-lysyl-[protein]. The enzyme catalyses N(6)-hexadecanoyl-L-lysyl-[protein] + NAD(+) + H2O = 2''-O-hexadecanoyl-ADP-D-ribose + nicotinamide + L-lysyl-[protein]. Inhibited by Sirtinol, A3 and M15 small molecules. Inhibited by nicotinamide. Its function is as follows. NAD-dependent protein deacetylase, which deacetylates internal lysines on histone and alpha-tubulin as well as many other proteins such as key transcription factors. Participates in the modulation of multiple and diverse biological processes such as cell cycle control, genomic integrity, microtubule dynamics, cell differentiation, metabolic networks, and autophagy. Plays a major role in the control of cell cycle progression and genomic stability. Functions in the antephase checkpoint preventing precocious mitotic entry in response to microtubule stress agents, and hence allowing proper inheritance of chromosomes. Positively regulates the anaphase promoting complex/cyclosome (APC/C) ubiquitin ligase complex activity by deacetylating CDC20 and FZR1, then allowing progression through mitosis. Associates both with chromatin at transcriptional start sites (TSSs) and enhancers of active genes. Plays a role in cell cycle and chromatin compaction through epigenetic modulation of the regulation of histone H4 'Lys-20' methylation (H4K20me1) during early mitosis. Specifically deacetylates histone H4 at 'Lys-16' (H4K16ac) between the G2/M transition and metaphase enabling H4K20me1 deposition by KMT5A leading to ulterior levels of H4K20me2 and H4K20me3 deposition throughout cell cycle, and mitotic S-phase progression. Deacetylates KMT5A modulating KMT5A chromatin localization during the mitotic stress response. Also deacetylates histone H3 at 'Lys-57' (H3K56ac) during the mitotic G2/M transition. During oocyte meiosis progression, may deacetylate histone H4 at 'Lys-16' (H4K16ac) and alpha-tubulin, regulating spindle assembly and chromosome alignment by influencing microtubule dynamics and kinetochore function. Deacetylates histone H4 at 'Lys-16' (H4K16ac) at the VEGFA promoter and thereby contributes to regulate expression of VEGFA, a key regulator of angiogenesis. Deacetylates alpha-tubulin at 'Lys-40' and hence controls neuronal motility, oligodendroglial cell arbor projection processes and proliferation of non-neuronal cells. Phosphorylation at Ser-368 by a G1/S-specific cyclin E-CDK2 complex inactivates SIRT2-mediated alpha-tubulin deacetylation, negatively regulating cell adhesion, cell migration and neurite outgrowth during neuronal differentiation. Deacetylates PARD3 and participates in the regulation of Schwann cell peripheral myelination formation during early postnatal development and during postinjury remyelination. Involved in several cellular metabolic pathways. Plays a role in the regulation of blood glucose homeostasis by deacetylating and stabilizing phosphoenolpyruvate carboxykinase PCK1 activity in response to low nutrient availability. Acts as a key regulator in the pentose phosphate pathway (PPP) by deacetylating and activating the glucose-6-phosphate G6PD enzyme, and therefore, stimulates the production of cytosolic NADPH to counteract oxidative damage. Maintains energy homeostasis in response to nutrient deprivation as well as energy expenditure by inhibiting adipogenesis and promoting lipolysis. Attenuates adipocyte differentiation by deacetylating and promoting FOXO1 interaction to PPARG and subsequent repression of PPARG-dependent transcriptional activity. Plays a role in the regulation of lysosome-mediated degradation of protein aggregates by autophagy in neuronal cells. Deacetylates FOXO1 in response to oxidative stress or serum deprivation, thereby negatively regulating FOXO1-mediated autophagy. Deacetylates a broad range of transcription factors and co-regulators regulating target gene expression. Deacetylates transcriptional factor FOXO3 stimulating the ubiquitin ligase SCF(SKP2)-mediated FOXO3 ubiquitination and degradation. Deacetylates HIF1A and therefore promotes HIF1A degradation and inhibition of HIF1A transcriptional activity in tumor cells in response to hypoxia. Deacetylates RELA in the cytoplasm inhibiting NF-kappaB-dependent transcription activation upon TNF-alpha stimulation. Inhibits transcriptional activation by deacetylating p53/TP53 and EP300. Also deacetylates EIF5A. Functions as a negative regulator on oxidative stress-tolerance in response to anoxia-reoxygenation conditions. Plays a role as tumor suppressor. In addition to protein deacetylase activity, also has activity toward long-chain fatty acyl groups and mediates protein-lysine demyristoylation and depalmitoylation of target proteins, such as ARF6 and KRAS, thereby regulating their association with membranes. The polypeptide is NAD-dependent protein deacetylase sirtuin-2 (SIRT2) (Macaca fascicularis (Crab-eating macaque)).